We begin with the raw amino-acid sequence, 90 residues long: MSIKLINIGFGNIVSANRLVAIVSPESAPIKRIIQEARDRGMLIDATYGRRTRAVIITDSDHVILSAVQPETVAHRLSSKDEVNIDEVDE.

The protein belongs to the RemA family.

The sequence is that of Putative regulatory protein NT01CX_2250 from Clostridium novyi (strain NT).